The chain runs to 243 residues: uncharacterized protein (243 aa).

Over residues 1 to 18 (MSNSHYNNYQQQQPHSSN) the composition is skewed to low complexity. Residues 1 to 30 (MSNSHYNNYQQQQPHSSNGDPEYQHQQMVH) are disordered. Residues 38–232 (GHGMKTVAVP…MHYKEYREYQ (195 aa)) enclose the AMMECR1 domain.

This is an uncharacterized protein from Drosophila melanogaster (Fruit fly).